Here is a 142-residue protein sequence, read N- to C-terminus: Universal stress protein C (142 aa).

It belongs to the universal stress protein A family.

Its subcellular location is the cytoplasm. In terms of biological role, required for resistance to DNA-damaging agents. The chain is Universal stress protein C (uspC) from Escherichia coli (strain K12).